Consider the following 458-residue polypeptide: Photosystem II CP43 reaction center protein (458 aa).

A run of 5 helical transmembrane segments spans residues 54 to 78 (LFEVAHFTPEKPLYEQGDILLPHLA), 119 to 140 (LRGPETLEQYSDFFSQDWKDKN), 163 to 185 (KAMFFGGLYDPWVPGGGGVRVIT), 240 to 260 (RPFNWARRSLVWSGEAYLSYS), and 276 to 297 (WFNNTVYPSEFYGPTGSEASQA). Glu-352 contributes to the [CaMn4O5] cluster binding site. Residues 432-456 (RARAAAAGFEKGIDRKTEPVLSMSD) traverse the membrane as a helical segment.

The protein belongs to the PsbB/PsbC family. PsbC subfamily. In terms of assembly, PSII is composed of 1 copy each of membrane proteins PsbA, PsbB, PsbC, PsbD, PsbE, PsbF, PsbH, PsbI, PsbJ, PsbK, PsbL, PsbM, PsbT, PsbX, PsbY, PsbZ, Psb30/Ycf12, peripheral proteins PsbO, CyanoQ (PsbQ), PsbU, PsbV and a large number of cofactors. It forms dimeric complexes. Binds multiple chlorophylls and provides some of the ligands for the Ca-4Mn-5O cluster of the oxygen-evolving complex. It may also provide a ligand for a Cl- that is required for oxygen evolution. PSII binds additional chlorophylls, carotenoids and specific lipids. serves as cofactor.

Its subcellular location is the cellular thylakoid membrane. One of the components of the core complex of photosystem II (PSII). It binds chlorophyll and helps catalyze the primary light-induced photochemical processes of PSII. PSII is a light-driven water:plastoquinone oxidoreductase, using light energy to abstract electrons from H(2)O, generating O(2) and a proton gradient subsequently used for ATP formation. This Prochlorothrix hollandica protein is Photosystem II CP43 reaction center protein.